The chain runs to 199 residues: V-set and transmembrane domain-containing protein 5 (199 aa).

Residues 1 to 27 (MRPLRCGERTQGIPLGLLAFWVTAARC) form the signal peptide. Residues 28–146 (LQSQGVSLYI…VSEIRYEDLH (119 aa)) are Extracellular-facing. Residues 35-138 (LYIPQSAINA…QSGTILLRVS (104 aa)) enclose the Ig-like C2-type domain. N-linked (GlcNAc...) asparagine glycosylation is found at Asn43, Asn87, and Asn101. A helical transmembrane segment spans residues 147 to 167 (FVAVFFALLAAVAVVLISLMW). Over 168 to 199 (VCNQCAYKFQRKRRYKLKESTTEEIEMKEVEC) the chain is Cytoplasmic. The segment at 169–185 (CNQCAYKFQRKRRYKLK) is important for CDC42-dependent filopodia induction.

As to quaternary structure, can homooligomerize through cis interactions within the same cell membrane. N-glycosylated. In terms of tissue distribution, highly expressed in the central nervous system (CNS), with the highest expression in thalamus, hippocampus, cerebrum, midbrain and spinal cord. Also highly expressed in stomach, kidney and small intestine.

It localises to the cell membrane. Its subcellular location is the cell projection. The protein resides in the dendrite. The protein localises to the axon. Its function is as follows. Cell adhesion-like membrane protein of the central nervous system (CNS) which modulates both the position and complexity of central neurons by altering their membrane morphology and dynamics. Involved in the formation of neuronal dendrites and protrusions including dendritic filopodia. In synaptogenesis, regulates synapse formation by altering dendritic spine morphology and actin distribution. Promotes formation of unstable neuronal spines such as thin and branched types. Regulates neuronal morphogenesis and migration during cortical development in the brain. The chain is V-set and transmembrane domain-containing protein 5 from Mus musculus (Mouse).